Here is a 167-residue protein sequence, read N- to C-terminus: MFSMVTEFMNYGQQTVRAARYIGQGFMITLSHANRLPVTIQYPYEKLITSERFRGRIHFEFDKCIACEVCVRVCPIDLPVVDWKLEMDIRKKRLLNYSIDFGICIFCGNCVEYCPTNCLSMTEEYELSTYDRHELNYNQIALGRLPMAVIDDYTTRTILNLPEIKNA.

4Fe-4S ferredoxin-type domains lie at Gly55–Lys84 and Leu95–Glu124. [4Fe-4S] cluster contacts are provided by Cys64, Cys67, Cys70, Cys74, Cys104, Cys107, Cys110, and Cys114.

The protein belongs to the complex I 23 kDa subunit family. In terms of assembly, NDH is composed of at least 16 different subunits, 5 of which are encoded in the nucleus. The cofactor is [4Fe-4S] cluster.

The protein resides in the plastid. Its subcellular location is the chloroplast thylakoid membrane. The enzyme catalyses a plastoquinone + NADH + (n+1) H(+)(in) = a plastoquinol + NAD(+) + n H(+)(out). It carries out the reaction a plastoquinone + NADPH + (n+1) H(+)(in) = a plastoquinol + NADP(+) + n H(+)(out). NDH shuttles electrons from NAD(P)H:plastoquinone, via FMN and iron-sulfur (Fe-S) centers, to quinones in the photosynthetic chain and possibly in a chloroplast respiratory chain. The immediate electron acceptor for the enzyme in this species is believed to be plastoquinone. Couples the redox reaction to proton translocation, and thus conserves the redox energy in a proton gradient. This is NAD(P)H-quinone oxidoreductase subunit I, chloroplastic from Panax ginseng (Korean ginseng).